An 87-amino-acid chain; its full sequence is Small ribosomal subunit protein bS18 (87 aa).

This sequence belongs to the bacterial ribosomal protein bS18 family. In terms of assembly, part of the 30S ribosomal subunit. Forms a tight heterodimer with protein bS6.

Its function is as follows. Binds as a heterodimer with protein bS6 to the central domain of the 16S rRNA, where it helps stabilize the platform of the 30S subunit. The chain is Small ribosomal subunit protein bS18 from Sulfurovum sp. (strain NBC37-1).